A 92-amino-acid chain; its full sequence is Small ribosomal subunit protein uS19 (92 aa).

It belongs to the universal ribosomal protein uS19 family.

In terms of biological role, protein S19 forms a complex with S13 that binds strongly to the 16S ribosomal RNA. The chain is Small ribosomal subunit protein uS19 from Paracoccus denitrificans (strain Pd 1222).